The primary structure comprises 466 residues: Cytochrome c-552 (466 aa).

Positions 1 to 27 (MVRILTKKSFALSALVAASLMASGAMA) are cleaved as a signal peptide. Histidine 87 serves as a coordination point for heme c. 3 residues coordinate heme: cysteine 115, cysteine 118, and lysine 119. Residues cysteine 153, cysteine 156, histidine 157, cysteine 195, cysteine 198, and histidine 199 each coordinate heme c. Residues glutamate 201, tyrosine 202, lysine 250, and glutamine 252 each coordinate Ca(2+). Tyrosine 202 provides a ligand contact to substrate. Histidine 253 lines the substrate pocket. 9 residues coordinate heme c: histidine 264, cysteine 271, cysteine 274, histidine 275, histidine 290, cysteine 303, cysteine 306, histidine 307, and histidine 382.

Belongs to the cytochrome c-552 family. Ca(2+) is required as a cofactor. The cofactor is heme c.

The protein resides in the periplasm. The catalysed reaction is 6 Fe(III)-[cytochrome c] + NH4(+) + 2 H2O = 6 Fe(II)-[cytochrome c] + nitrite + 8 H(+). Its pathway is nitrogen metabolism; nitrate reduction (assimilation). Its function is as follows. Catalyzes the reduction of nitrite to ammonia, consuming six electrons in the process. The polypeptide is Cytochrome c-552 (Shewanella woodyi (strain ATCC 51908 / MS32)).